The sequence spans 261 residues: Carboxy-terminal domain RNA polymerase II polypeptide A small phosphatase 1 (261 aa).

An N-acetylmethionine modification is found at methionine 1. Residues 1-10 (MDSSAVITQI) show a composition bias toward polar residues. A disordered region spans residues 1 to 33 (MDSSAVITQISKEEARGPLRGKGDQKSAASQKP). Positions 11-25 (SKEEARGPLRGKGDQ) are enriched in basic and acidic residues. Residues 86–244 (QDSDKICVVI…HDLLPFFEQL (159 aa)) enclose the FCP1 homology domain. Residue aspartate 96 is the 4-aspartylphosphate intermediate of the active site. Mg(2+) is bound by residues aspartate 96, aspartate 98, and asparagine 207. Residue aspartate 98 is the Proton donor of the active site.

As to quaternary structure, monomer. Interacts with GTF2F1. Interacts with REST. It depends on Mg(2+) as a cofactor. Expression is restricted to non-neuronal tissues. Highest expression in skeletal muscle, spleen, lung and placenta.

The protein resides in the nucleus. It catalyses the reaction O-phospho-L-seryl-[protein] + H2O = L-seryl-[protein] + phosphate. The enzyme catalyses O-phospho-L-threonyl-[protein] + H2O = L-threonyl-[protein] + phosphate. Stimulated by GTF2F1. Inhibited by beryllofluoride anions. In terms of biological role, preferentially catalyzes the dephosphorylation of 'Ser-5' within the tandem 7 residue repeats in the C-terminal domain (CTD) of the largest RNA polymerase II subunit POLR2A. Negatively regulates RNA polymerase II transcription, possibly by controlling the transition from initiation/capping to processive transcript elongation. Recruited by REST to neuronal genes that contain RE-1 elements, leading to neuronal gene silencing in non-neuronal cells. The protein is Carboxy-terminal domain RNA polymerase II polypeptide A small phosphatase 1 (CTDSP1) of Homo sapiens (Human).